The following is a 124-amino-acid chain: Small ribosomal subunit protein uS12 (124 aa).

Asp-89 is modified (3-methylthioaspartic acid).

Belongs to the universal ribosomal protein uS12 family. As to quaternary structure, part of the 30S ribosomal subunit. Contacts proteins S8 and S17. May interact with IF1 in the 30S initiation complex.

In terms of biological role, with S4 and S5 plays an important role in translational accuracy. Interacts with and stabilizes bases of the 16S rRNA that are involved in tRNA selection in the A site and with the mRNA backbone. Located at the interface of the 30S and 50S subunits, it traverses the body of the 30S subunit contacting proteins on the other side and probably holding the rRNA structure together. The combined cluster of proteins S8, S12 and S17 appears to hold together the shoulder and platform of the 30S subunit. The sequence is that of Small ribosomal subunit protein uS12 from Thermoanaerobacter pseudethanolicus (strain ATCC 33223 / 39E) (Clostridium thermohydrosulfuricum).